Reading from the N-terminus, the 269-residue chain is Putative hydro-lyase Atu3911 (269 aa).

The protein belongs to the D-glutamate cyclase family.

The polypeptide is Putative hydro-lyase Atu3911 (Agrobacterium fabrum (strain C58 / ATCC 33970) (Agrobacterium tumefaciens (strain C58))).